A 208-amino-acid polypeptide reads, in one-letter code: V-type ATP synthase subunit E (208 aa).

This sequence belongs to the V-ATPase E subunit family.

Produces ATP from ADP in the presence of a proton gradient across the membrane. The sequence is that of V-type ATP synthase subunit E from Chlamydia felis (strain Fe/C-56) (Chlamydophila felis).